Reading from the N-terminus, the 213-residue chain is Pyridoxine/pyridoxamine 5'-phosphate oxidase (213 aa).

FMN-binding positions include 60–65 (RMVLMK), 75–76 (YS), lysine 82, and glutamine 104. Lysine 65 lines the substrate pocket. Tyrosine 122, arginine 126, and serine 130 together coordinate substrate. Residues 139–140 (QS) and tryptophan 184 each bind FMN. Position 190 to 192 (190 to 192 (RLH)) interacts with substrate. Arginine 194 provides a ligand contact to FMN.

It belongs to the pyridoxamine 5'-phosphate oxidase family. In terms of assembly, homodimer. The cofactor is FMN.

It catalyses the reaction pyridoxamine 5'-phosphate + O2 + H2O = pyridoxal 5'-phosphate + H2O2 + NH4(+). It carries out the reaction pyridoxine 5'-phosphate + O2 = pyridoxal 5'-phosphate + H2O2. It functions in the pathway cofactor metabolism; pyridoxal 5'-phosphate salvage; pyridoxal 5'-phosphate from pyridoxamine 5'-phosphate: step 1/1. It participates in cofactor metabolism; pyridoxal 5'-phosphate salvage; pyridoxal 5'-phosphate from pyridoxine 5'-phosphate: step 1/1. Catalyzes the oxidation of either pyridoxine 5'-phosphate (PNP) or pyridoxamine 5'-phosphate (PMP) into pyridoxal 5'-phosphate (PLP). In Rhodopseudomonas palustris (strain BisB18), this protein is Pyridoxine/pyridoxamine 5'-phosphate oxidase.